The primary structure comprises 600 residues: Proline dehydrogenase 1, mitochondrial (600 aa).

The tract at residues 155–177 (AEHKEMESCTSAAERDGSGTNKR) is disordered. Residues Lys368 and Lys486 each carry the N6-acetyllysine modification.

Belongs to the proline oxidase family. FAD serves as cofactor. In terms of tissue distribution, expressed in lung, skeletal muscle and brain, to a lesser extent in heart and kidney, and weakly in liver, placenta and pancreas.

It is found in the mitochondrion matrix. It catalyses the reaction L-proline + a quinone = (S)-1-pyrroline-5-carboxylate + a quinol + H(+). Its pathway is amino-acid degradation; L-proline degradation into L-glutamate; L-glutamate from L-proline: step 1/2. In terms of biological role, converts proline to delta-1-pyrroline-5-carboxylate. The polypeptide is Proline dehydrogenase 1, mitochondrial (Homo sapiens (Human)).